The following is a 391-amino-acid chain: MATVQEIRNAQRADGPATVLAIGTATPAHSVNQADYPDYYFRITKSEHMTELKEKFKRMCDKSMIKKRYMYLTEEILKENPNMCAYMAPSLDARQDIVVVEVPKLGKEAATKAIKEWGQPKSKITHLIFCTTSGVDMPGADYQLTKLIGLRPSVKRFMMYQQGCFAGGTVLRLAKDLAENNKGARVLVVCSEITAVTFRGPADTHLDSLVGQALFGDGAAAVIVGADPDTSVERPLYQLVSTSQTILPDSDGAIDGHLREVGLTFHLLKDVPGLISKNIEKSLSEAFAPLGISDWNSIFWIAHPGGPAILDQVESKLGLKGEKLKATRQVLSEYGNMSSACVLFILDEMRKKSVEEAKATTGEGLDWGVLFGFGPGLTVETVVLHSVPIKA.

The active site involves Cys-164.

Belongs to the thiolase-like superfamily. Chalcone/stilbene synthases family.

It carries out the reaction (E)-4-coumaroyl-CoA + 3 malonyl-CoA + 3 H(+) = 2',4,4',6'-tetrahydroxychalcone + 3 CO2 + 4 CoA. It participates in secondary metabolite biosynthesis; flavonoid biosynthesis. The primary product of this enzyme is 4,2',4',6'-tetrahydroxychalcone (also termed naringenin-chalcone or chalcone) which can under specific conditions spontaneously isomerize into naringenin. This is Chalcone synthase 2 (CHS2) from Citrus sinensis (Sweet orange).